Reading from the N-terminus, the 640-residue chain is PTS system mannitol-specific EIICBA component (640 aa).

Positions 12 to 343 constitute a PTS EIIC type-2 domain; it reads LGRFLSAMIM…LKISNRNHYV (332 aa). A run of 6 helical transmembrane segments spans residues 24-45, 50-70, 134-155, 165-185, 273-292, and 313-334; these read ISVFIAWGIISGLFIKSGWCPN, KVLSPISVYLFPILIANTGGY, SVGILGVLLLFISFLCIGPMIE, VNLMINNHLLPFIAILIEPAK, LILGSITGIFILIVLRGGLI, and VINLLAIIISFLVSFLVSCMLL. One can recognise a PTS EIIB type-2 domain in the interval 379 to 475; the sequence is RNIIFACDAG…YLVENNLDNN (97 aa). C385 serves as the catalytic Phosphocysteine intermediate; for EIIB activity. The residue at position 385 (C385) is a Phosphocysteine; by EIIA. The 143-residue stretch at 496 to 638 folds into the PTS EIIA type-2 domain; the sequence is FSLTKENIFL…DDVLYLFSRK (143 aa). Catalysis depends on H556, which acts as the Tele-phosphohistidine intermediate; for EIIA activity. H556 bears the Phosphohistidine; by HPr mark.

Homodimer. In terms of processing, an intramolecular phosphotransfer takes places between His-556 and Cys-385.

The protein resides in the cell inner membrane. The catalysed reaction is D-mannitol(out) + N(pros)-phospho-L-histidyl-[protein] = D-mannitol 1-phosphate(in) + L-histidyl-[protein]. Its function is as follows. The phosphoenolpyruvate-dependent sugar phosphotransferase system (sugar PTS), a major carbohydrate active transport system, catalyzes the phosphorylation of incoming sugar substrates concomitantly with their translocation across the cell membrane. This system is involved in D-mannitol transport. The protein is PTS system mannitol-specific EIICBA component (mtlA) of Buchnera aphidicola subsp. Baizongia pistaciae (strain Bp).